We begin with the raw amino-acid sequence, 576 residues long: Putative export ATP-binding/permease protein RC1073 (576 aa).

The ABC transmembrane type-1 domain maps to 20-303 (LIIVMISLLS…IFELLSEMHL (284 aa)). 6 helical membrane-spanning segments follow: residues 21-41 (IIVMISLLSVSASLLLIGSVF), 57-77 (VDNSILYICLLIIILSIASFF), 135-155 (FLSFFIRNSVMLIGSITLMFF), 158-178 (FKLASIVIITIPILLIPLIKF), 242-262 (ALFFAISIAVIFLAITLVVWI), and 277-297 (IISFIYYAIIAGVSCGGIFEL). The ABC transporter domain maps to 336 to 572 (IEFKNVDFTY…SEIYRNICRE (237 aa)). 371-378 (GRSGAGKS) lines the ATP pocket.

Belongs to the ABC transporter superfamily. As to quaternary structure, homodimer.

The protein resides in the cell inner membrane. Functionally, part of an ABC transporter complex. Transmembrane domains (TMD) form a pore in the inner membrane and the ATP-binding domain (NBD) is responsible for energy generation. The chain is Putative export ATP-binding/permease protein RC1073 from Rickettsia conorii (strain ATCC VR-613 / Malish 7).